The following is a 658-amino-acid chain: Exoribonuclease 2 (658 aa).

Residues 189–530 (REDLTSLYFT…VNHRLIKQVL (342 aa)) enclose the RNB domain. The S1 motif domain occupies 576 to 658 (AVEFDCEIAD…ETRSIVGNII (83 aa)).

Belongs to the RNR ribonuclease family. RNase II subfamily.

It localises to the cytoplasm. The enzyme catalyses Exonucleolytic cleavage in the 3'- to 5'-direction to yield nucleoside 5'-phosphates.. Functionally, involved in mRNA degradation. Hydrolyzes single-stranded polyribonucleotides processively in the 3' to 5' direction. The protein is Exoribonuclease 2 of Actinobacillus pleuropneumoniae serotype 3 (strain JL03).